The chain runs to 365 residues: MPLSNRSTLTQYLIEERRRFPGASGELNALILDVSLACKAIARAVAFGELGDALGDAAAMPTGGAVNVQGEVQKKLDVLSNEVFIRRNEWSGSLAGMASEEMETPYQIPGQYPRGKYLLVFDPLDGSSNIDVNVSVGSIFSILRAPQDVIDSGRDVTEADFLQPGAAQVAAGYALYGPTTMLMLTVGNGVAGFTLNPTLGEFMLTHANVTVPADTREFAINASNARFWEPPVKRYVDECLAGATGPRGKDFNMRWIASMVAEAHRILMRGGVFMYPRDTKDASKPGRLRLLYEANPIGMLMEQAGGRASTGRQPMLGVKPTSLHQRIGLVFGSKNEVERIERYHHEPVTREFATPLFAERSLFRD.

Mg(2+) is bound by residues Glu100, Asp122, Leu124, and Asp125. Substrate contacts are provided by residues 125 to 128 (DGSS) and Asn221. Glu293 contributes to the Mg(2+) binding site.

This sequence belongs to the FBPase class 1 family. As to quaternary structure, homotetramer. Mg(2+) serves as cofactor.

It is found in the cytoplasm. It carries out the reaction beta-D-fructose 1,6-bisphosphate + H2O = beta-D-fructose 6-phosphate + phosphate. It participates in carbohydrate biosynthesis; gluconeogenesis. The chain is Fructose-1,6-bisphosphatase class 1 2 from Leptothrix cholodnii (strain ATCC 51168 / LMG 8142 / SP-6) (Leptothrix discophora (strain SP-6)).